Here is a 526-residue protein sequence, read N- to C-terminus: Tyrosine 2,3-aminomutase (526 aa).

Catalysis depends on Y41, which acts as the Proton donor/acceptor. Position 71 (H71) interacts with substrate. Residues 130–132 (ASG) constitute a cross-link (5-imidazolinone (Ala-Gly)). S131 is subject to 2,3-didehydroalanine (Ser). N183 and R288 together coordinate substrate.

This sequence belongs to the TAL/TAM family. Homotetramer; dimer of dimers. Contains an active site 4-methylidene-imidazol-5-one (MIO), which is formed autocatalytically by cyclization and dehydration of residues Ala-Ser-Gly.

The catalysed reaction is L-tyrosine = 3-amino-3-(4-hydroxyphenyl)propanoate. The enzyme catalyses L-tyrosine = (E)-4-coumarate + NH4(+). Functionally, has aminomutase and, to a much lesser extent, ammonia-lyase activity. Primarily, catalyzes the rearrangement of L-tyrosine to S-beta-tyrosine, which is probably incorporated into secondary metabolite myxovalargin. The aminomutase activity exclusively produces S-beta-tyrosine. This chain is Tyrosine 2,3-aminomutase, found in Myxococcus sp. (strain Mx-B0).